The sequence spans 98 residues: Small ribosomal subunit protein eS24 (98 aa).

The disordered stretch occupies residues 76-98; the sequence is GRQRTERSYLLNRGEPKKEEEEA. Residues 89-98 are compositionally biased toward basic and acidic residues; that stretch reads GEPKKEEEEA.

Belongs to the eukaryotic ribosomal protein eS24 family.

In Methanosphaerula palustris (strain ATCC BAA-1556 / DSM 19958 / E1-9c), this protein is Small ribosomal subunit protein eS24.